Here is a 350-residue protein sequence, read N- to C-terminus: tRNA uridine(34) hydroxylase (350 aa).

In terms of domain architecture, Rhodanese spans 146–240 (DDPDALFIDM…YARKAREQGL (95 aa)). Cysteine 200 (cysteine persulfide intermediate) is an active-site residue.

Belongs to the TrhO family.

It catalyses the reaction uridine(34) in tRNA + AH2 + O2 = 5-hydroxyuridine(34) in tRNA + A + H2O. Functionally, catalyzes oxygen-dependent 5-hydroxyuridine (ho5U) modification at position 34 in tRNAs, the first step in 5-carboxymethoxyuridine (cmo5U) biosynthesis. May be part of an alternate pathway, which is able to bypass cmo5U biogenesis in a subset of tRNAs under aerobic conditions. This Escherichia coli O9:H4 (strain HS) protein is tRNA uridine(34) hydroxylase.